Here is a 617-residue protein sequence, read N- to C-terminus: Protein AsmA (617 aa).

Residues 1-3 (MRR) lie on the Cytoplasmic side of the membrane. The helical transmembrane segment at 4–24 (FLTTLMILLVVLVAGLSALVL) threads the bilayer. The Periplasmic segment spans residues 25 to 617 (LVNPNDFRDY…KDVKKLLEKM (593 aa)). Residues 302-319 (TANGENGAAQQGQSQSTL) are compositionally biased toward polar residues. The interval 302–321 (TANGENGAAQQGQSQSTLPR) is disordered.

It belongs to the AsmA family.

Its subcellular location is the cell inner membrane. In terms of biological role, could be involved in the assembly of outer membrane proteins. May indirectly influence the assembly of outer membrane proteins, potentially by altering outer membrane fluidity. Inhibits the assembly of mutant forms of outer membrane protein F (OmpF). This chain is Protein AsmA, found in Escherichia coli (strain K12).